Consider the following 308-residue polypeptide: ATP synthase gamma chain (308 aa).

It belongs to the ATPase gamma chain family. As to quaternary structure, F-type ATPases have 2 components, CF(1) - the catalytic core - and CF(0) - the membrane proton channel. CF(1) has five subunits: alpha(3), beta(3), gamma(1), delta(1), epsilon(1). CF(0) has three main subunits: a, b and c.

The protein localises to the cell membrane. Produces ATP from ADP in the presence of a proton gradient across the membrane. The gamma chain is believed to be important in regulating ATPase activity and the flow of protons through the CF(0) complex. The sequence is that of ATP synthase gamma chain from Lacticaseibacillus casei (strain BL23) (Lactobacillus casei).